The primary structure comprises 315 residues: Putative 2-hydroxyacid dehydrogenase HI_1556 (315 aa).

NAD(+)-binding positions include Thr73, 156-157, 231-233, and Asp257; these read CL and TGR. Residue Arg233 is part of the active site. Glu262 is a catalytic residue. His285 serves as the catalytic Proton donor. 285 to 288 serves as a coordination point for NAD(+); sequence HIAW.

It belongs to the D-isomer specific 2-hydroxyacid dehydrogenase family.

This chain is Putative 2-hydroxyacid dehydrogenase HI_1556, found in Haemophilus influenzae (strain ATCC 51907 / DSM 11121 / KW20 / Rd).